A 214-amino-acid polypeptide reads, in one-letter code: Dephospho-CoA kinase (214 aa).

The DPCK domain maps to R20 to F214. A28 to I33 contributes to the ATP binding site.

Belongs to the CoaE family.

The protein localises to the cytoplasm. The enzyme catalyses 3'-dephospho-CoA + ATP = ADP + CoA + H(+). It functions in the pathway cofactor biosynthesis; coenzyme A biosynthesis; CoA from (R)-pantothenate: step 5/5. Catalyzes the phosphorylation of the 3'-hydroxyl group of dephosphocoenzyme A to form coenzyme A. This is Dephospho-CoA kinase from Prochlorococcus marinus (strain NATL2A).